The following is a 453-amino-acid chain: Odorant receptor 83a (453 aa).

Residues 1-28 (MKSTFKEERIKDDSKRRDLFVFVRQTMC) lie on the Cytoplasmic side of the membrane. The helical transmembrane segment at 29–49 (IAAMYPFGYYVNGSGVLAVLV) threads the bilayer. The Extracellular segment spans residues 50-85 (RFCDLTYELFNYFVSVHIAGLYICTIYINYGQGDLD). Residues 86–106 (FFVNCLIQTIIYLWTIAMKLY) traverse the membrane as a helical segment. The Cytoplasmic segment spans residues 107 to 148 (FRRFRPGLLNTILSNINDEYETRSAVGFSFVTMAGSYRMSKL). The helical transmembrane segment at 149–169 (WIKTYVYCCYIGTIFWLALPI) threads the bilayer. Residues 170-203 (AYRDRSLPLACWYPFDYTQPGVYEVVFLLQAMGQ) are Extracellular-facing. A helical membrane pass occupies residues 204-224 (IQVAASFASSSGLHMVLCVLI). The Cytoplasmic portion of the chain corresponds to 225 to 322 (SGQYDVLFCS…ALKKIESFYS (98 aa)). Residues 323-343 (PIWFVKIGEVTFLMCLVAFVS) traverse the membrane as a helical segment. Topologically, residues 344-359 (TKSTAANSFMRMVSLG) are extracellular. The chain crosses the membrane as a helical span at residues 360–380 (QYLLLVLYELFIICYFADIVF). Over 381–408 (QNSQRCGEALWRSPWQRHLKDVRSDYMF) the chain is Cytoplasmic. A helical membrane pass occupies residues 409-429 (FMLNSRRQFQLTAGKISNLNV). Residues 430–453 (DRFRGTITTAFSFLTLLQKMDARE) are Extracellular-facing.

It belongs to the insect chemoreceptor superfamily. Heteromeric odorant receptor channel (TC 1.A.69) family. Or2a subfamily. In terms of assembly, interacts with Orco. Complexes exist early in the endomembrane system in olfactory sensory neurons (OSNs), coupling these complexes to the conserved ciliary trafficking pathway.

It localises to the cell membrane. Functionally, odorant receptor which mediates acceptance or avoidance behavior, depending on its substrates. The odorant receptor repertoire encodes a large collection of odor stimuli that vary widely in identity, intensity, and duration. May form a complex with Orco to form odorant-sensing units, providing sensitive and prolonged odorant signaling and calcium permeability. Involved in the behavioral responses to pentanol, ethyl acetate, and propyl acetate. This is Odorant receptor 83a (Or83a) from Drosophila melanogaster (Fruit fly).